Reading from the N-terminus, the 65-residue chain is Large ribosomal subunit protein bL28 (65 aa).

This sequence belongs to the bacterial ribosomal protein bL28 family.

The sequence is that of Large ribosomal subunit protein bL28 from Bifidobacterium animalis subsp. lactis (strain AD011).